Reading from the N-terminus, the 644-residue chain is 1-deoxy-D-xylulose-5-phosphate synthase (644 aa).

Thiamine diphosphate contacts are provided by residues histidine 84 and 125–127; that span reads GHS. Aspartate 156 is a Mg(2+) binding site. Residues 157-158, asparagine 185, tyrosine 296, and glutamate 378 each bind thiamine diphosphate; that span reads GA. Asparagine 185 is a binding site for Mg(2+).

This sequence belongs to the transketolase family. DXPS subfamily. As to quaternary structure, homodimer. Mg(2+) serves as cofactor. Requires thiamine diphosphate as cofactor.

It carries out the reaction D-glyceraldehyde 3-phosphate + pyruvate + H(+) = 1-deoxy-D-xylulose 5-phosphate + CO2. The protein operates within metabolic intermediate biosynthesis; 1-deoxy-D-xylulose 5-phosphate biosynthesis; 1-deoxy-D-xylulose 5-phosphate from D-glyceraldehyde 3-phosphate and pyruvate: step 1/1. Catalyzes the acyloin condensation reaction between C atoms 2 and 3 of pyruvate and glyceraldehyde 3-phosphate to yield 1-deoxy-D-xylulose-5-phosphate (DXP). This Paramagnetospirillum magneticum (strain ATCC 700264 / AMB-1) (Magnetospirillum magneticum) protein is 1-deoxy-D-xylulose-5-phosphate synthase.